A 110-amino-acid polypeptide reads, in one-letter code: Cell cycle protein GpsB (110 aa).

The stretch at 37–63 (KDYTVYIALVKELQEENAKLKAKATSA) forms a coiled coil. Positions 59-79 (KATSAPASRPAYASATSEPSH) are disordered. The span at 60 to 75 (ATSAPASRPAYASATS) shows a compositional bias: low complexity.

This sequence belongs to the GpsB family. In terms of assembly, forms polymers through the coiled coil domains. Interacts with PBP1, MreC and EzrA.

It is found in the cytoplasm. Functionally, divisome component that associates with the complex late in its assembly, after the Z-ring is formed, and is dependent on DivIC and PBP2B for its recruitment to the divisome. Together with EzrA, is a key component of the system that regulates PBP1 localization during cell cycle progression. Its main role could be the removal of PBP1 from the cell pole after pole maturation is completed. Also contributes to the recruitment of PBP1 to the division complex. Not essential for septum formation. This chain is Cell cycle protein GpsB, found in Streptococcus thermophilus (strain CNRZ 1066).